The following is a 249-amino-acid chain: Triosephosphate isomerase (249 aa).

9 to 11 (NWK) provides a ligand contact to substrate. Residue histidine 95 is the Electrophile of the active site. Catalysis depends on glutamate 165, which acts as the Proton acceptor. Substrate is bound by residues glycine 171, serine 210, and 231–232 (GG).

It belongs to the triosephosphate isomerase family. As to quaternary structure, homodimer.

It is found in the cytoplasm. The enzyme catalyses D-glyceraldehyde 3-phosphate = dihydroxyacetone phosphate. It functions in the pathway carbohydrate biosynthesis; gluconeogenesis. The protein operates within carbohydrate degradation; glycolysis; D-glyceraldehyde 3-phosphate from glycerone phosphate: step 1/1. Functionally, involved in the gluconeogenesis. Catalyzes stereospecifically the conversion of dihydroxyacetone phosphate (DHAP) to D-glyceraldehyde-3-phosphate (G3P). In Hyphomonas neptunium (strain ATCC 15444), this protein is Triosephosphate isomerase.